Consider the following 48-residue polypeptide: Fimbrial assembly protein, serogroup E2 (48 aa).

In Dichelobacter nodosus (Bacteroides nodosus), this protein is Fimbrial assembly protein, serogroup E2 (fimB).